A 100-amino-acid chain; its full sequence is Small ribosomal subunit protein uS14 (100 aa).

It belongs to the universal ribosomal protein uS14 family. Part of the 30S ribosomal subunit. Contacts proteins S3 and S10.

Its function is as follows. Binds 16S rRNA, required for the assembly of 30S particles and may also be responsible for determining the conformation of the 16S rRNA at the A site. This chain is Small ribosomal subunit protein uS14, found in Synechococcus sp. (strain CC9605).